A 179-amino-acid chain; its full sequence is Cell division protein SepF (179 aa).

The segment at 18-57 (EDSTVPYEKGNEPVFTPVNSSQEPDLPMNQPSQSAGAKDS) is disordered. Positions 34–57 (PVNSSQEPDLPMNQPSQSAGAKDS) are enriched in polar residues.

It belongs to the SepF family. Homodimer. Interacts with FtsZ.

Its subcellular location is the cytoplasm. Cell division protein that is part of the divisome complex and is recruited early to the Z-ring. Probably stimulates Z-ring formation, perhaps through the cross-linking of FtsZ protofilaments. Its function overlaps with FtsA. This is Cell division protein SepF from Streptococcus pneumoniae (strain Hungary19A-6).